The sequence spans 228 residues: Upstream activation factor subunit UAF30 (228 aa).

One can recognise a DEK-C domain in the interval 1–56 (MAELNDYSTMIDILLSDMDLETVTTKKVRMALKEVYAIDVESQGKAINKLIRKHLD). The span at 89–111 (SKRSSGEEKNDSETKGTHVEKKK) shows a compositional bias: basic and acidic residues. Residues 89–118 (SKRSSGEEKNDSETKGTHVEKKKGTVSKSP) form a disordered region. An SWIB/MDM2 domain is found at 119–195 (ISTRKVTLSK…HKILASHMTE (77 aa)). Residues 209–228 (VRRKEKPIVSDSEQSDTKGI) are disordered. 3 positions are modified to phosphoserine: Ser218, Ser220, and Ser223.

In terms of assembly, component of the UAF (upstream activation factor) complex which consists of UAF30, RRN5, RRN9, RRN10, and histones H3 and H4.

The protein localises to the nucleus. It is found in the nucleolus. Its function is as follows. Nonessential component of the UAF (upstream activation factor) complex which interacts with the upstream element of the RNA polymerase I promoter and forms a stable preinitiation complex. Together with SPT15/TBP UAF seems to stimulate basal transcription to a fully activated level. UAF30 seems to play a role in silencing transcription by RNA polymerase II. The chain is Upstream activation factor subunit UAF30 (UAF30) from Saccharomyces cerevisiae (strain ATCC 204508 / S288c) (Baker's yeast).